The primary structure comprises 43 residues: Protein PsbN (43 aa).

The chain crosses the membrane as a helical span at residues 5-27 (TLVXISISGSLVSFTGYALYTAF).

The protein belongs to the PsbN family.

The protein resides in the plastid. It localises to the chloroplast thylakoid membrane. In terms of biological role, may play a role in photosystem I and II biogenesis. The protein is Protein PsbN of Calycanthus floridus (Eastern sweetshrub).